The following is a 385-amino-acid chain: Tetraacyldisaccharide 4'-kinase (385 aa).

60 to 67 contacts ATP; the sequence is TVGGSGKT.

This sequence belongs to the LpxK family.

It catalyses the reaction a lipid A disaccharide + ATP = a lipid IVA + ADP + H(+). It functions in the pathway glycolipid biosynthesis; lipid IV(A) biosynthesis; lipid IV(A) from (3R)-3-hydroxytetradecanoyl-[acyl-carrier-protein] and UDP-N-acetyl-alpha-D-glucosamine: step 6/6. Transfers the gamma-phosphate of ATP to the 4'-position of a tetraacyldisaccharide 1-phosphate intermediate (termed DS-1-P) to form tetraacyldisaccharide 1,4'-bis-phosphate (lipid IVA). The polypeptide is Tetraacyldisaccharide 4'-kinase (Psychrobacter arcticus (strain DSM 17307 / VKM B-2377 / 273-4)).